The following is a 284-amino-acid chain: Deoxyribonuclease-1 (284 aa).

An N-terminal signal peptide occupies residues 1–22 (MRYTGLMGILLTLVNLLQLAAT). The N-linked (GlcNAc...) asparagine glycan is linked to Asn40. Residue Glu100 is part of the active site. Cysteines 123 and 126 form a disulfide. N-linked (GlcNAc...) asparagine glycosylation occurs at Asn128. His156 is an active-site residue. Residues Cys195 and Cys231 are joined by a disulfide bond.

This sequence belongs to the DNase I family. Requires Ca(2+) as cofactor. Mg(2+) is required as a cofactor.

It is found in the secreted. The protein localises to the zymogen granule. The protein resides in the nucleus envelope. The enzyme catalyses Endonucleolytic cleavage to 5'-phosphodinucleotide and 5'-phosphooligonucleotide end-products.. Functionally, serum endocuclease secreted into body fluids by a wide variety of exocrine and endocrine organs. Expressed by non-hematopoietic tissues and preferentially cleaves protein-free DNA. Among other functions, seems to be involved in cell death by apoptosis. Binds specifically to G-actin and blocks actin polymerization. Together with DNASE1L3, plays a key role in degrading neutrophil extracellular traps (NETs). NETs are mainly composed of DNA fibers and are released by neutrophils to bind pathogens during inflammation. Degradation of intravascular NETs by DNASE1 and DNASE1L3 is required to prevent formation of clots that obstruct blood vessels and cause organ damage following inflammation. This is Deoxyribonuclease-1 (Dnase1) from Rattus norvegicus (Rat).